A 240-amino-acid polypeptide reads, in one-letter code: Proteasome subunit beta type-1 (240 aa).

Methionine 1 bears the N-acetylmethionine mark. A propeptide spanning residues methionine 1–leucine 27 is cleaved from the precursor. An O-linked (GlcNAc) serine glycan is attached at serine 57. Residues serine 61 and serine 67 each carry the phosphoserine modification. Phosphotyrosine is present on tyrosine 149. Phosphoserine is present on serine 161. Lysine 203 is subject to N6-acetyllysine. Serine 208 is a glycosylation site (O-linked (GlcNAc) serine).

This sequence belongs to the peptidase T1B family. As to quaternary structure, the 26S proteasome consists of a 20S proteasome core and two 19S regulatory subunits. The 20S proteasome core is a barrel-shaped complex made of 28 subunits that are arranged in four stacked rings. The two outer rings are each formed by seven alpha subunits, and the two inner rings are formed by seven beta subunits. The proteolytic activity is exerted by three beta-subunits PSMB5, PSMB6 and PSMB7. Interacts with SERPINB2. Interacts with RFPL4A. Detected in liver (at protein level).

It is found in the cytoplasm. It localises to the nucleus. Its function is as follows. Non-catalytic component of the 20S core proteasome complex involved in the proteolytic degradation of most intracellular proteins. This complex plays numerous essential roles within the cell by associating with different regulatory particles. Associated with two 19S regulatory particles, forms the 26S proteasome and thus participates in the ATP-dependent degradation of ubiquitinated proteins. The 26S proteasome plays a key role in the maintenance of protein homeostasis by removing misfolded or damaged proteins that could impair cellular functions, and by removing proteins whose functions are no longer required. Associated with the PA200 or PA28, the 20S proteasome mediates ubiquitin-independent protein degradation. This type of proteolysis is required in several pathways including spermatogenesis (20S-PA200 complex) or generation of a subset of MHC class I-presented antigenic peptides (20S-PA28 complex). The chain is Proteasome subunit beta type-1 (Psmb1) from Mus musculus (Mouse).